A 68-amino-acid polypeptide reads, in one-letter code: Copper transport protein ATOX1 (68 aa).

The region spanning 1–63 (MPKHEFSVDM…TLNKTGKAVS (63 aa)) is the HMA domain. Cu cation contacts are provided by Cys12 and Cys15. Ser47 bears the Phosphoserine mark. At Lys60 the chain carries N6-acetyllysine.

Belongs to the ATX1 family. In terms of assembly, homodimer. Interacts with ATP7B. Interacts with ATP7A. Interacts (via dimer form) with SLC31A1 (via C-terminal domain); this interaction improves ATOX1 stability and controls intracellular Cu(I) levels.

Functionally, binds and deliver cytosolic copper to the copper ATPase proteins. May be important in cellular antioxidant defense. This Mus musculus (Mouse) protein is Copper transport protein ATOX1.